The following is a 549-amino-acid chain: Glucose-6-phosphate isomerase (549 aa).

N6-acetyllysine is present on residues Lys80, Lys228, and Lys234. Glu355 (proton donor) is an active-site residue. Residues His386 and Lys514 contribute to the active site.

It belongs to the GPI family.

The protein localises to the cytoplasm. It catalyses the reaction alpha-D-glucose 6-phosphate = beta-D-fructose 6-phosphate. It functions in the pathway carbohydrate biosynthesis; gluconeogenesis. It participates in carbohydrate degradation; glycolysis; D-glyceraldehyde 3-phosphate and glycerone phosphate from D-glucose: step 2/4. Functionally, catalyzes the reversible isomerization of glucose-6-phosphate to fructose-6-phosphate. This Escherichia fergusonii (strain ATCC 35469 / DSM 13698 / CCUG 18766 / IAM 14443 / JCM 21226 / LMG 7866 / NBRC 102419 / NCTC 12128 / CDC 0568-73) protein is Glucose-6-phosphate isomerase.